The following is a 242-amino-acid chain: DNA repair protein RecO (242 aa).

This sequence belongs to the RecO family.

Involved in DNA repair and RecF pathway recombination. This is DNA repair protein RecO from Xanthobacter autotrophicus (strain ATCC BAA-1158 / Py2).